Consider the following 666-residue polypeptide: Asperfuranone cluster transcription factor afoA (666 aa).

Residues 16–43 constitute a DNA-binding region (zn(2)-C6 fungal-type); sequence CEECRRRKARCDRVRPKCGFCTENELQC. Disordered stretches follow at residues 184 to 206 and 347 to 373; these read LSFD…STTR and AGSD…GENA. A compositionally biased stretch (low complexity) spans 353-369; that stretch reads LSPPSSSPPSSLTLSPS.

The protein localises to the nucleus. Its function is as follows. Transcription factor that regulates the expression of the gene cluster that mediates the biosynthesis of asperfuranone, a probable antitumor agent. The polypeptide is Asperfuranone cluster transcription factor afoA (Emericella nidulans (strain FGSC A4 / ATCC 38163 / CBS 112.46 / NRRL 194 / M139) (Aspergillus nidulans)).